Here is a 191-residue protein sequence, read N- to C-terminus: dTTP/UTP pyrophosphatase (191 aa).

The active-site Proton acceptor is Asp-71.

Belongs to the Maf family. YhdE subfamily. A divalent metal cation is required as a cofactor.

Its subcellular location is the cytoplasm. The catalysed reaction is dTTP + H2O = dTMP + diphosphate + H(+). It carries out the reaction UTP + H2O = UMP + diphosphate + H(+). Functionally, nucleoside triphosphate pyrophosphatase that hydrolyzes dTTP and UTP. May have a dual role in cell division arrest and in preventing the incorporation of modified nucleotides into cellular nucleic acids. The polypeptide is dTTP/UTP pyrophosphatase (Geobacter sulfurreducens (strain ATCC 51573 / DSM 12127 / PCA)).